The chain runs to 384 residues: N-acetyldiaminopimelate deacetylase (384 aa).

Asp74 is an active-site residue. The Proton acceptor role is filled by Glu133.

This sequence belongs to the peptidase M20A family. N-acetyldiaminopimelate deacetylase subfamily.

It carries out the reaction N-acetyl-(2S,6S)-2,6-diaminopimelate + H2O = (2S,6S)-2,6-diaminopimelate + acetate. It participates in amino-acid biosynthesis; L-lysine biosynthesis via DAP pathway; LL-2,6-diaminopimelate from (S)-tetrahydrodipicolinate (acetylase route): step 3/3. In terms of biological role, catalyzes the conversion of N-acetyl-diaminopimelate to diaminopimelate and acetate. The sequence is that of N-acetyldiaminopimelate deacetylase from Pediococcus pentosaceus (strain ATCC 25745 / CCUG 21536 / LMG 10740 / 183-1w).